A 593-amino-acid chain; its full sequence is Transcription factor ATEG_07667 (593 aa).

A DNA-binding region (zn(2)-C6 fungal-type) is located at residues 18–47 (CTQCYKAKCRCVRTPSGDTCERCIRLKKRC).

Its subcellular location is the nucleus. Transcriptional regulator that regulates both the azasperpyranone A biosynthesis clusters A and B. Specifically up-regulates the expression of the cluster A and B specific transcription factors ATEG_03638 and ATEG_07666, which in turn activate the expression of their respective clusters. The sequence is that of Transcription factor ATEG_07667 from Aspergillus terreus (strain NIH 2624 / FGSC A1156).